A 115-amino-acid chain; its full sequence is U3-lycotoxin-Ls1n (115 aa).

The N-terminal stretch at 1-20 (MKFVLLFGVLLVTLFSYSSA) is a signal peptide. Residues 21–44 (EMLDDFDQADEDELLSLIEKEEAR) constitute a propeptide that is removed on maturation. Intrachain disulfides connect Cys48–Cys63, Cys55–Cys72, Cys62–Cys87, and Cys74–Cys85.

This sequence belongs to the neurotoxin 19 (CSTX) family. 01 subfamily. As to expression, expressed by the venom gland.

The protein localises to the secreted. The polypeptide is U3-lycotoxin-Ls1n (Lycosa singoriensis (Wolf spider)).